A 573-amino-acid polypeptide reads, in one-letter code: Probable zinc metallopeptidase EGY3, chloroplastic (573 aa).

A chloroplast-targeting transit peptide spans 1–50; the sequence is MASLFVSTPSSSLTLKSCHSLHLRRFDRAEFSNFGKASVNQTTRSRHSLR. A disordered region spans residues 38–105; it reads SVNQTTRSRH…EKKSKQQEMD (68 aa). Basic and acidic residues-rich tracts occupy residues 52–62 and 96–105; these read SAEDDRVREPV and EKKSKQQEMD. Residues 122 to 185 adopt a coiled-coil conformation; it reads EAAIKLEKTR…KALDLNKLKS (64 aa). 7 helical membrane-spanning segments follow: residues 274–294, 305–325, 376–396, 414–434, 441–461, 493–513, and 536–556; these read VSAIALCVTTFGTIALMSGFF, IANVVPLFGGFLSILGVSEIA, ASAYLTSLLLAAAAFISDGSF, PLLSFVQFVVGPYADDLGNVL, VGVPVDPLAFAGLLGMVVTSL, LLLGIGGLSGSVLCLAWGLFA, and FAWGIVLGLICFLTLFPNSGG.

The protein belongs to the peptidase M50B family.

Its subcellular location is the plastid. The protein localises to the chloroplast membrane. Probable membrane-associated metalloprotease that may be involved in chloroplast development. In Arabidopsis thaliana (Mouse-ear cress), this protein is Probable zinc metallopeptidase EGY3, chloroplastic (EGY3).